The primary structure comprises 400 residues: Forkhead box protein Q1 (400 aa).

The segment at 1 to 112 (MKLEVFVPRA…EGARSKPYTR (112 aa)) is disordered. Residues 32 to 54 (LSAAGDDSLGSDGDCAANSPAAG) are compositionally biased toward low complexity. 2 stretches are compositionally biased toward gly residues: residues 55–66 (SGAGDLEGGGGE) and 95–104 (CAGGVGGGEG). The fork-head DNA-binding region spans 115 to 210 (KPPYSYIALI…ADGVFRRRRK (96 aa)). Residues 213-264 (SHRTTVSASGLRPEEAPPGPAGTPQPAPAARSSPIARSPARQEERSSPASKF) form a disordered region. The span at 228-239 (APPGPAGTPQPA) shows a compositional bias: pro residues. Residues 240 to 251 (PAARSSPIARSP) show a composition bias toward low complexity.

In terms of tissue distribution, expressed in kidney and stomach. Expression in the outer medulla of the kidney and the transitional epithelium. Expressed in the hair follicle medulla.

Its subcellular location is the nucleus. In terms of biological role, plays a role in hair follicle differentiation. The sequence is that of Forkhead box protein Q1 (Foxq1) from Mus musculus (Mouse).